The sequence spans 304 residues: Oxygen-dependent coproporphyrinogen-III oxidase (304 aa).

Residue serine 94 participates in substrate binding. Positions 98 and 108 each coordinate a divalent metal cation. Catalysis depends on histidine 108, which acts as the Proton donor. 110–112 (NVR) contacts substrate. A divalent metal cation-binding residues include histidine 147 and histidine 177. An important for dimerization region spans residues 242–277 (YVEFNLVWDRGTLFGLQSGGRTESVLMSMPPLARWQ). 260-262 (GGR) contacts substrate.

The protein belongs to the aerobic coproporphyrinogen-III oxidase family. Homodimer. A divalent metal cation serves as cofactor.

The protein resides in the cytoplasm. The catalysed reaction is coproporphyrinogen III + O2 + 2 H(+) = protoporphyrinogen IX + 2 CO2 + 2 H2O. Its pathway is porphyrin-containing compound metabolism; protoporphyrin-IX biosynthesis; protoporphyrinogen-IX from coproporphyrinogen-III (O2 route): step 1/1. In terms of biological role, involved in the heme biosynthesis. Catalyzes the aerobic oxidative decarboxylation of propionate groups of rings A and B of coproporphyrinogen-III to yield the vinyl groups in protoporphyrinogen-IX. This chain is Oxygen-dependent coproporphyrinogen-III oxidase, found in Sodalis glossinidius (strain morsitans).